We begin with the raw amino-acid sequence, 387 residues long: Probable G-protein coupled receptor 173 (387 aa).

Over 1-40 (MANGNASSDGPGNPLAAVVSTTGGVMGGAPSSAVSTYVKL) the chain is Extracellular. The N-linked (GlcNAc...) asparagine glycan is linked to Asn-5. A helical transmembrane segment spans residues 41–61 (VLLGLIICISLVGNLVVSLLV). Topologically, residues 62-87 (LRDRALHKAPYYFLLDLCLADTIRSA) are cytoplasmic. Residues 88–108 (VCFPFVLVSIKNGSAWTYSVL) form a helical membrane-spanning segment. Residues 109–111 (SCK) lie on the Extracellular side of the membrane. Cys-110 and Cys-188 are oxidised to a cystine. The chain crosses the membrane as a helical span at residues 112–132 (VVAFMAVLFCFHAAFMLFCIS). Residues 133-153 (VTRYMAIAHHRFYSKRMTFWT) are Cytoplasmic-facing. A helical transmembrane segment spans residues 154-174 (CVAVVCMVWTLSVAMAFPPVF). The Extracellular portion of the chain corresponds to 175–202 (DVGTYKFIREEDQCIFEHRYFKANDTLG). Asn-198 carries an N-linked (GlcNAc...) asparagine glycan. Residues 203-223 (FMLMLAVLILATHVVYMKLLL) traverse the membrane as a helical segment. Over 224-301 (FEYKHRKMKP…FKAEKQLGRM (78 aa)) the chain is Cytoplasmic. The chain crosses the membrane as a helical span at residues 302-322 (FYVITLFFLVLWSPYIVACYW). At 323–335 (RVFVKACTIPHRY) the chain is on the extracellular side. Residues 336–356 (LSTTVWMSFAQAGVNPIICFF) form a helical membrane-spanning segment. The Cytoplasmic segment spans residues 357–387 (LNKDLKKGLLAHLPPCCRTPPQLPREPYCVM).

This sequence belongs to the G-protein coupled receptor 1 family.

The protein localises to the cell membrane. Is a receptor for the SMIM20 derived peptides Phoenixin-14 and Phoenixin-20. It mediates the Phoenixin-14 and Phoenixin-20 augmentation of gonadotropin-releasing hormone (GNRH) signaling in the hypothalamus and pituitary gland. In the ovary, it mediates the effects of Phoenixin-14 and Phoenixin-20 induced granulosa cell proliferation during follicular growth. The protein is Probable G-protein coupled receptor 173 (gpr173) of Danio rerio (Zebrafish).